Consider the following 241-residue polypeptide: Tetraspanin-1 (241 aa).

Residues 1–11 (MQCFSFIKTMM) are Cytoplasmic-facing. A helical membrane pass occupies residues 12 to 34 (ILFNLLIFLCGAALLAVGIWVSI). The Extracellular segment spans residues 35–53 (DGASFLKIFGPLSSSAMQF). A helical transmembrane segment spans residues 54-76 (VNVGYFLIAAGVVVFALGFLGCY). Residues 77–88 (GAKTESKCALMT) lie on the Cytoplasmic side of the membrane. The chain crosses the membrane as a helical span at residues 89–111 (FFFILLLIFIAEVAAAVVALVYT). The Extracellular segment spans residues 112-214 (TMAEHFLTLL…LYDIRTNAVT (103 aa)). Asn-141, Asn-154, Asn-178, and Asn-184 each carry an N-linked (GlcNAc...) asparagine glycan. Residues 215–237 (VGGVAAGIGGLELAAMIVSMYLY) form a helical membrane-spanning segment. The Cytoplasmic segment spans residues 238 to 241 (CNLQ).

Belongs to the tetraspanin (TM4SF) family. As to quaternary structure, interacts with SLC19A2. Interacts with NTRK1/TRKA.

Its subcellular location is the lysosome membrane. Functionally, structural component of specialized membrane microdomains known as tetraspanin-enriched microdomains (TERMs), which act as platforms for receptor clustering and signaling. Participates thereby in diverse biological functions such as cell signal transduction, adhesion, migration and protein trafficking. Regulates neuronal differentiation in response to NGF by facilitating NGF-mediated activation of NTRK1/TRKA receptor tyrosine kinase and subsequent downstream signaling pathways. Plays a role in the inhibition of TNFalpha-induced apoptosis. Mechanistically, inhibits the NF-kappa-B signaling pathway by blocking phosphorylation of CHUK. Also promotes the stability of the thiamine transporter 1/SLC19A2 in intestinal epithelial cells leading to an increase of thiamine uptake process. This is Tetraspanin-1 (TSPAN1) from Pongo abelii (Sumatran orangutan).